The sequence spans 285 residues: Pantothenate synthetase (285 aa).

An ATP-binding site is contributed by 30-37; it reads MGFLHEGH. The active-site Proton donor is the His37. (R)-pantoate is bound at residue Gln61. A beta-alanine-binding site is contributed by Gln61. 147–150 serves as a coordination point for ATP; the sequence is GQKD. Gln153 lines the (R)-pantoate pocket. ATP is bound by residues Val176 and 184–187; that span reads KSSR.

It belongs to the pantothenate synthetase family. As to quaternary structure, homodimer.

It is found in the cytoplasm. It catalyses the reaction (R)-pantoate + beta-alanine + ATP = (R)-pantothenate + AMP + diphosphate + H(+). It participates in cofactor biosynthesis; (R)-pantothenate biosynthesis; (R)-pantothenate from (R)-pantoate and beta-alanine: step 1/1. Functionally, catalyzes the condensation of pantoate with beta-alanine in an ATP-dependent reaction via a pantoyl-adenylate intermediate. The chain is Pantothenate synthetase from Listeria monocytogenes serotype 4b (strain F2365).